A 1832-amino-acid chain; its full sequence is Zinc finger SWIM domain-containing protein 8 (1832 aa).

A phosphoserine mark is found at serine 36, serine 48, and serine 53. Residues arginine 45–arginine 67 form a disordered region. The span at threonine 55 to glycine 65 shows a compositional bias: gly residues. The SWIM-type zinc-finger motif lies at tyrosine 172–isoleucine 208. Serine 437 and serine 564 each carry phosphoserine. 3 disordered regions span residues proline 516–glutamate 722, asparagine 800–serine 821, and serine 1018–valine 1216. Residues leucine 563–leucine 572 show a composition bias toward basic and acidic residues. Over residues histidine 1021–serine 1042 the composition is skewed to polar residues. Gly residues predominate over residues serine 1121–serine 1132. At threonine 1141 the chain carries Phosphothreonine. Positions isoleucine 1146–leucine 1161 are enriched in polar residues. Phosphoserine occurs at positions 1155, 1158, and 1162. The span at glycine 1176–alanine 1211 shows a compositional bias: low complexity. Serine 1270 bears the Phosphoserine mark. The segment covering serine 1435–glycine 1446 has biased composition (polar residues). The disordered stretch occupies residues serine 1435–alanine 1465. Positions alanine 1455–alanine 1465 are enriched in gly residues. Phosphoserine is present on serine 1831.

The protein belongs to the ZSWIM8 family. Component of the SCF-like E3 ubiquitin-protein ligase complex which contains CUL3, RBX1, ELOB, ELOC and ZSWIM8. Interacts with DAB1.

It is found in the cytoplasm. Its subcellular location is the cytosol. Its pathway is protein modification; protein ubiquitination. Its function is as follows. Substrate recognition component of a SCF-like E3 ubiquitin-protein ligase complex that promotes target-directed microRNA degradation (TDMD), a process that mediates degradation of microRNAs (miRNAs). The SCF-like E3 ubiquitin-protein ligase complex acts by catalyzing ubiquitination and subsequent degradation of AGO proteins (AGO1, AGO2, AGO3 and/or AGO4), thereby exposing miRNAs for degradation. Specifically recognizes and binds AGO proteins when they are engaged with a TDMD target. May also acts as a regulator of axon guidance: specifically recognizes misfolded ROBO3 and promotes its ubiquitination and subsequent degradation. Plays an essential role for proper embryonic development of heart and lung. Controls protein quality of DAB1, a key signal molecule for brain development, thus protecting its signaling strength. Mechanistically, recognizes intrinsically disordered regions of DAB1 and eliminates misfolded DAB1 that cannot be properly phosphorylated. This Mus musculus (Mouse) protein is Zinc finger SWIM domain-containing protein 8.